Here is a 195-residue protein sequence, read N- to C-terminus: Imidazoleglycerol-phosphate dehydratase (195 aa).

Belongs to the imidazoleglycerol-phosphate dehydratase family.

It localises to the cytoplasm. The catalysed reaction is D-erythro-1-(imidazol-4-yl)glycerol 3-phosphate = 3-(imidazol-4-yl)-2-oxopropyl phosphate + H2O. The protein operates within amino-acid biosynthesis; L-histidine biosynthesis; L-histidine from 5-phospho-alpha-D-ribose 1-diphosphate: step 6/9. This is Imidazoleglycerol-phosphate dehydratase from Geobacter metallireducens (strain ATCC 53774 / DSM 7210 / GS-15).